Here is a 155-residue protein sequence, read N- to C-terminus: NADPH-dependent 7-cyano-7-deazaguanine reductase (155 aa).

The Thioimide intermediate role is filled by cysteine 53. Aspartate 60 functions as the Proton donor in the catalytic mechanism. Residues 75–77 and 94–95 each bind substrate; these read VES and HE.

The protein belongs to the GTP cyclohydrolase I family. QueF type 1 subfamily.

It localises to the cytoplasm. The enzyme catalyses 7-aminomethyl-7-carbaguanine + 2 NADP(+) = 7-cyano-7-deazaguanine + 2 NADPH + 3 H(+). It participates in tRNA modification; tRNA-queuosine biosynthesis. Functionally, catalyzes the NADPH-dependent reduction of 7-cyano-7-deazaguanine (preQ0) to 7-aminomethyl-7-deazaguanine (preQ1). The sequence is that of NADPH-dependent 7-cyano-7-deazaguanine reductase from Ruegeria pomeroyi (strain ATCC 700808 / DSM 15171 / DSS-3) (Silicibacter pomeroyi).